Consider the following 258-residue polypeptide: Large ribosomal subunit protein uL3 (258 aa).

The protein belongs to the universal ribosomal protein uL3 family. As to quaternary structure, part of the 50S ribosomal subunit. Forms a cluster with proteins L14 and L19.

Its function is as follows. One of the primary rRNA binding proteins, it binds directly near the 3'-end of the 23S rRNA, where it nucleates assembly of the 50S subunit. The sequence is that of Large ribosomal subunit protein uL3 from Spiroplasma kunkelii.